Here is a 312-residue protein sequence, read N- to C-terminus: Glyoxylate/hydroxypyruvate reductase A (312 aa).

Residue Arg227 is part of the active site. Catalysis depends on His275, which acts as the Proton donor.

It belongs to the D-isomer specific 2-hydroxyacid dehydrogenase family. GhrA subfamily.

It localises to the cytoplasm. It catalyses the reaction glycolate + NADP(+) = glyoxylate + NADPH + H(+). The enzyme catalyses (R)-glycerate + NAD(+) = 3-hydroxypyruvate + NADH + H(+). It carries out the reaction (R)-glycerate + NADP(+) = 3-hydroxypyruvate + NADPH + H(+). Catalyzes the NADPH-dependent reduction of glyoxylate and hydroxypyruvate into glycolate and glycerate, respectively. This Escherichia fergusonii (strain ATCC 35469 / DSM 13698 / CCUG 18766 / IAM 14443 / JCM 21226 / LMG 7866 / NBRC 102419 / NCTC 12128 / CDC 0568-73) protein is Glyoxylate/hydroxypyruvate reductase A.